The chain runs to 631 residues: Nucleoside triphosphatase I (631 aa).

One can recognise a Helicase ATP-binding domain in the interval 42 to 204 (FLGLDSMHSL…TMLVNLLRPG (163 aa)). 55–62 (HETGVGKT) contacts ATP. A DEXH box motif is present at residues 141-144 (DECH). The 166-residue stretch at 367–532 (KFIDVCLGIL…EFVQLFRVFK (166 aa)) folds into the Helicase C-terminal domain. The tract at residues 457 to 524 (DIFILDMTWN…EIIQSKSKEF (68 aa)) is binding to the cap-specific mRNA (nucleoside-2'-O-)-methyltransferase.

The protein belongs to the helicase family. NPH I subfamily. As to quaternary structure, monomer. Interacts (via C-terminus) with RAP94/OPG109 (via N-terminus). Interacts with the cap-specific mRNA (nucleoside-2'-O-)-methyltransferase OPG102.

It is found in the virion. It catalyses the reaction a ribonucleoside 5'-triphosphate + H2O = a ribonucleoside 5'-diphosphate + phosphate + H(+). Functionally, DNA-dependent ATPase that acts as a 5' to 3' translocase on single-stranded DNA and thereby plays a role in transcription termination of viral early genes. Uses forward translocation in concert with the viral RNA polymerase RAP94/OPG109 subunit and the capping enzyme/VTF to catalyze release of UUUUUNU-containing nascent RNA from the elongation complex. In addition, acts as a positive elongation factor to assist transcription through problematic sequences. This Bos taurus (Bovine) protein is Nucleoside triphosphatase I (OPG123).